Consider the following 144-residue polypeptide: NADH dehydrogenase [ubiquinone] 1 alpha subcomplex subunit 13 (144 aa).

Residue Ala-2 is modified to N-acetylalanine. A helical transmembrane segment spans residues 30 to 51 (LSGYSMFAVGIGALLFGYWSMM).

In terms of assembly, complex I is composed of 45 different subunits. Interacts with CARD15, but not with CARD4. Interacts with STAT3, but not with STAT1, STAT2 and STAT5A. Interacts with OLFM4.

It is found in the mitochondrion inner membrane. It localises to the nucleus. Functionally, accessory subunit of the mitochondrial membrane respiratory chain NADH dehydrogenase (Complex I), that is believed not to be involved in catalysis. Complex I functions in the transfer of electrons from NADH to the respiratory chain. The immediate electron acceptor for the enzyme is believed to be ubiquinone. Involved in the interferon/all-trans-retinoic acid (IFN/RA) induced cell death. This apoptotic activity is inhibited by interaction with viral IRF1. Prevents the transactivation of STAT3 target genes. May play a role in CARD15-mediated innate mucosal responses and serve to regulate intestinal epithelial cell responses to microbes. The sequence is that of NADH dehydrogenase [ubiquinone] 1 alpha subcomplex subunit 13 (NDUFA13) from Bos taurus (Bovine).